Reading from the N-terminus, the 299-residue chain is MQLLRAGLTLALGAGLGAAAESWWRQRADARATPGLLSRLPVLPVAAAAGLPAVPGAPAGGGPGELAKYGLPGVAQLKSRASYVLCYDPRTRGALWVVEQLRPEGLRGDGNRSSCDFHEDDSVHAYHRATNADYRGSGFDRGHLAAAANHRWSQKAMDDTFYLSNVAPQVPHLNQNAWNNLEKYSRSLTRTYQNVYVCTGPLFLPRTEADGKSYVKYQVIGKNHVAVPTHFFKVLILEAAGGQIELRSYVMPNAPVDEAIPLEHFLVPIESIERASGLLFVPNILARAGSLKAITAGSK.

Residues 1–48 (MQLLRAGLTLALGAGLGAAAESWWRQRADARATPGLLSRLPVLPVAAA) constitute a mitochondrion transit peptide. Thr130 is subject to Phosphothreonine. His143 acts as the Proton acceptor in catalysis. Asn174 is a binding site for Mg(2+). Positions 288–298 (AGSLKAITAGS) are essential for deoxyribonuclease activity. At Ser290 the chain carries Phosphoserine.

This sequence belongs to the DNA/RNA non-specific endonuclease family. Homodimer; disulfide-linked. Homodimerization is essential for its activity. Interacts with YWHAG. It depends on Mg(2+) as a cofactor. Post-translationally, GSK3-beta-mediated dual phosphorylations at Thr-130 and Ser-290 is necessary for its interaction with YWHAG and the induction of autophagy.

The protein resides in the mitochondrion. Functionally, endonuclease that preferentially catalyzes the cleavage of double-stranded 5-hydroxymethylcytosine (5hmC)-modified DNA. The 5hmC-modified nucleotide does not increase the binding affinity, but instead increases the efficiency of cutting and specifies the site of cleavage for the modified DNAs. Shows significantly higher affinity for four- stranded Holliday junction over duplex and single-stranded DNAs. Promotes conservative recombination when the DNA is 5hmC-modified. Promotes autophagy through the suppression of mTOR by its phosphorylation-mediated interaction with YWHAG and its endonuclease activity-mediated DNA damage response. GSK3-beta mediated phosphorylation of ENDOG enhances its interaction with YWHAG, leading to the release of TSC2 and PIK3C3 from YWHAG resulting in mTOR pathway suppression and autophagy initiation. Promotes cleavage of mtDNA in response to oxidative and nitrosative stress, in turn inducing compensatory mtDNA replication. In Bos taurus (Bovine), this protein is Endonuclease G, mitochondrial (ENDOG).